Consider the following 453-residue polypeptide: Bifunctional protein GlmU (453 aa).

Residues 1 to 227 (MNKLSVVILA…LMEVEGVNNR (227 aa)) are pyrophosphorylase. UDP-N-acetyl-alpha-D-glucosamine contacts are provided by residues 9 to 12 (LAAG), K23, Q74, 79 to 80 (GT), 101 to 103 (YGD), G138, E152, N167, and N225. Mg(2+) is bound at residue D103. N225 contributes to the Mg(2+) binding site. Residues 228–248 (LQLANLERHFQRKQVEKLLLA) form a linker region. The segment at 249 to 453 (GVTFADPARF…ISNWQRPKRK (205 aa)) is N-acetyltransferase. Positions 331 and 349 each coordinate UDP-N-acetyl-alpha-D-glucosamine. The active-site Proton acceptor is the H361. Y364 and N375 together coordinate UDP-N-acetyl-alpha-D-glucosamine. Acetyl-CoA-binding positions include A378, 384–385 (NY), S403, A421, and R438.

It in the N-terminal section; belongs to the N-acetylglucosamine-1-phosphate uridyltransferase family. The protein in the C-terminal section; belongs to the transferase hexapeptide repeat family. In terms of assembly, homotrimer. Mg(2+) serves as cofactor.

Its subcellular location is the cytoplasm. The enzyme catalyses alpha-D-glucosamine 1-phosphate + acetyl-CoA = N-acetyl-alpha-D-glucosamine 1-phosphate + CoA + H(+). It carries out the reaction N-acetyl-alpha-D-glucosamine 1-phosphate + UTP + H(+) = UDP-N-acetyl-alpha-D-glucosamine + diphosphate. It functions in the pathway nucleotide-sugar biosynthesis; UDP-N-acetyl-alpha-D-glucosamine biosynthesis; N-acetyl-alpha-D-glucosamine 1-phosphate from alpha-D-glucosamine 6-phosphate (route II): step 2/2. It participates in nucleotide-sugar biosynthesis; UDP-N-acetyl-alpha-D-glucosamine biosynthesis; UDP-N-acetyl-alpha-D-glucosamine from N-acetyl-alpha-D-glucosamine 1-phosphate: step 1/1. Its pathway is bacterial outer membrane biogenesis; LPS lipid A biosynthesis. Functionally, catalyzes the last two sequential reactions in the de novo biosynthetic pathway for UDP-N-acetylglucosamine (UDP-GlcNAc). The C-terminal domain catalyzes the transfer of acetyl group from acetyl coenzyme A to glucosamine-1-phosphate (GlcN-1-P) to produce N-acetylglucosamine-1-phosphate (GlcNAc-1-P), which is converted into UDP-GlcNAc by the transfer of uridine 5-monophosphate (from uridine 5-triphosphate), a reaction catalyzed by the N-terminal domain. This Histophilus somni (strain 129Pt) (Haemophilus somnus) protein is Bifunctional protein GlmU.